Here is a 279-residue protein sequence, read N- to C-terminus: Phycobilisome 34.5 kDa linker polypeptide, phycoerythrocyanin-associated, rod (279 aa).

One can recognise a PBS-linker domain in the interval 2-178; sequence STSVAERLAI…LYRGRANSDN (177 aa). In terms of domain architecture, CpcD-like spans 226-278; it reads ARMFIVEAIAGTLNTNVAVRRSRQVYTVPYDRLSATYQEIHKRGGKIVKITPA.

Belongs to the phycobilisome linker protein family.

Its subcellular location is the cellular thylakoid membrane. Functionally, rod linker protein, associated with phycoerythrocyanin. Linker polypeptides determine the state of aggregation and the location of the disk-shaped phycobiliprotein units within the phycobilisome and modulate their spectroscopic properties in order to mediate a directed and optimal energy transfer. The polypeptide is Phycobilisome 34.5 kDa linker polypeptide, phycoerythrocyanin-associated, rod (pecC) (Mastigocladus laminosus (Fischerella sp.)).